The sequence spans 124 residues: Small ribosomal subunit protein uS11 (124 aa).

It belongs to the universal ribosomal protein uS11 family. As to quaternary structure, part of the 30S ribosomal subunit.

In terms of biological role, located on the platform of the 30S subunit. This Methanococcus aeolicus (strain ATCC BAA-1280 / DSM 17508 / OCM 812 / Nankai-3) protein is Small ribosomal subunit protein uS11.